The chain runs to 389 residues: Aromatic-amino-acid aminotransferase 2 (389 aa).

Residue K233 is modified to N6-(pyridoxal phosphate)lysine.

This sequence belongs to the class-I pyridoxal-phosphate-dependent aminotransferase family. Homodimer. Requires pyridoxal 5'-phosphate as cofactor.

The enzyme catalyses an aromatic L-alpha-amino acid + 2-oxoglutarate = an aromatic oxo-acid + L-glutamate. Catalyzes the transamination of phenylalanine, tyrosine and tryptophan. Shows virtually no activity towards aspartic acid, alanine, valine or isoleucine. This is Aromatic-amino-acid aminotransferase 2 from Thermococcus litoralis (strain ATCC 51850 / DSM 5473 / JCM 8560 / NS-C).